Reading from the N-terminus, the 1168-residue chain is Carbamoyl phosphate synthase arginine-specific large chain, mitochondrial (1168 aa).

A mitochondrion-targeting transit peptide spans 1-51; sequence MLSTVHKAGRAPALLRHGRRVPVQASQLRALTSGAQNTSIFQTQANAAQRL. The segment at 86-483 is carboxyphosphate synthetic domain; that stretch reads RDHVDVKKVL…SFQKAIRQVD (398 aa). Residues arginine 213, 243-298, arginine 253, glycine 259, glycine 260, lysine 290, leucine 292, glutamate 297, glycine 323, isoleucine 324, histidine 325, glutamine 366, and glutamate 380 contribute to the ATP site; that span reads ANKI…WKEV. An ATP-grasp 1 domain is found at 217 to 409; that stretch reads AKALEEINIP…LAYTAAKIGL (193 aa). Residues glutamine 366, glutamate 380, and asparagine 382 each contribute to the Mg(2+) site. Residues glutamine 366, glutamate 380, and asparagine 382 each contribute to the Mn(2+) site. Residues 484-628 form an oligomerization domain region; it reads PRFVGFQGDK…YTTYNASSHD (145 aa). A carbamoyl phosphate synthetic domain region spans residues 629 to 1017; that stretch reads VTFEDKGTVI…AYWASLQSAM (389 aa). In terms of domain architecture, ATP-grasp 2 spans 754–951; sequence SEILDSIGVD…FIDAATKALV (198 aa). ATP contacts are provided by residues 780 to 837, arginine 790, lysine 829, isoleucine 831, glutamate 836, glycine 861, valine 862, histidine 863, serine 864, glutamine 904, and glutamate 922; that span reads AEEV…AQEI. 3 residues coordinate Mg(2+): glutamine 904, glutamate 922, and asparagine 924. 3 residues coordinate Mn(2+): glutamine 904, glutamate 922, and asparagine 924. An allosteric domain region spans residues 1018–1152; the sequence is NFRVPEPGEG…AEKLPRPEGI (135 aa). The region spanning 1019-1168 is the MGS-like domain; the sequence is FRVPEPGEGL…WSEFIGGKPL (150 aa).

The protein belongs to the CarB family. In terms of assembly, heterodimer composed of 2 chains; the small (or glutamine) chain promotes the hydrolysis of glutamine to ammonia, which is used by the large (or ammonia) chain to synthesize carbamoyl phosphate. Requires Mg(2+) as cofactor. Mn(2+) is required as a cofactor.

It localises to the mitochondrion matrix. It catalyses the reaction hydrogencarbonate + L-glutamine + 2 ATP + H2O = carbamoyl phosphate + L-glutamate + 2 ADP + phosphate + 2 H(+). The enzyme catalyses hydrogencarbonate + NH4(+) + 2 ATP = carbamoyl phosphate + 2 ADP + phosphate + 2 H(+). It functions in the pathway amino-acid biosynthesis; L-arginine biosynthesis; carbamoyl phosphate from bicarbonate: step 1/1. Functionally, large subunit of the arginine-specific carbamoyl phosphate synthase (CPSase). CPSase catalyzes the formation of carbamoyl phosphate from the ammonia moiety of glutamine, hydrogencarbonate, and phosphate donated by ATP, the first step of the arginine biosynthetic pathway. The large subunit (synthetase) binds the substrates ammonia (free or transferred from glutamine from the small subunit), hydrogencarbonate and ATP and carries out an ATP-coupled ligase reaction, activating hydrogencarbonate by forming carboxy phosphate which reacts with ammonia to form carbamoyl phosphate. The chain is Carbamoyl phosphate synthase arginine-specific large chain, mitochondrial (arg-3) from Neurospora crassa (strain ATCC 24698 / 74-OR23-1A / CBS 708.71 / DSM 1257 / FGSC 987).